Consider the following 477-residue polypeptide: Proton-coupled amino acid transporter 3 (477 aa).

The segment covering 1–13 (MGKTPLLREDGRC) has biased composition (basic and acidic residues). Residues 1–42 (MGKTPLLREDGRCQRNTFGGSKASSKGSSSSSSNNTVSSKKK) are disordered. Over 1–54 (MGKTPLLREDGRCQRNTFGGSKASSKGSSSSSSNNTVSSKKKPRRKADALMFIQ) the chain is Cytoplasmic. Positions 19-38 (GGSKASSKGSSSSSSNNTVS) are enriched in low complexity. The chain crosses the membrane as a helical span at residues 55–75 (IFIHLLKSNIGTGFLGLPLAV). Topologically, residues 76–77 (KN) are extracellular. The chain crosses the membrane as a helical span at residues 78-98 (AGLLVGPVSLLAIGALTVHCM). At 99 to 144 (DILLNCACHLTSRLQRSFVNYEETTMYSLETCPSPWLRTHSVWGRY) the chain is on the cytoplasmic side. A helical membrane pass occupies residues 145–165 (VVSFLLIVTQLGFCSVYFMFM). Topologically, residues 166 to 202 (ADNLQQIVEEAHFTSNVCQPRQSLVMTSILDTRFYML) are extracellular. The helical transmembrane segment at 203 to 223 (TILPFLILLVLVQNPQVLSIF) threads the bilayer. The Cytoplasmic segment spans residues 224–225 (ST). Residues 226–246 (LATITTLSSLALIFEYLIQIP) form a helical membrane-spanning segment. At 247 to 259 (HHSHLPLVASWKT) the chain is on the extracellular side. Residues 260-280 (FLLFFGTAIFTFEGVGMVLPL) traverse the membrane as a helical segment. At 281 to 291 (KSQMKSPQQFP) the chain is on the cytoplasmic side. Residues 292-312 (AVLYLGMSFVIFLYICLGTLG) form a helical membrane-spanning segment. At 313–344 (YMKFGADTQASITLNLPNCWLYQSVKLMYSVG) the chain is on the extracellular side. The chain crosses the membrane as a helical span at residues 345-365 (IFFTYALQFHVPAEIIVPYVV). Over 366–374 (SRASENWAL) the chain is Cytoplasmic. A helical transmembrane segment spans residues 375–395 (FIDLTVRAALVCLTCFSAVLI). Residues 396 to 399 (PRLD) lie on the Extracellular side of the membrane. A helical transmembrane segment spans residues 400–420 (LVISLVGSVSSSALALIIPPL). The Cytoplasmic segment spans residues 421–439 (LEIATFYSENISCTTIAKD). Residues 440 to 460 (IMISILGLLGCVLGTYQALYE) form a helical membrane-spanning segment. Residues 461–477 (MTQQSRFPMLNSTNVHT) are Extracellular-facing.

Belongs to the amino acid/polyamine transporter 2 family.

It is found in the membrane. The polypeptide is Proton-coupled amino acid transporter 3 (Slc36a3) (Rattus norvegicus (Rat)).